Reading from the N-terminus, the 286-residue chain is Shikimate dehydrogenase (NADP(+)) (286 aa).

Shikimate contacts are provided by residues 22–24 (SRS) and T71. The Proton acceptor role is filled by K75. E87 is an NADP(+) binding site. Residues N96 and D111 each coordinate shikimate. NADP(+) contacts are provided by residues 136–140 (GAGGA), 160–165 (NRTPER), and I225. Shikimate is bound at residue Y227. Residue G248 coordinates NADP(+).

It belongs to the shikimate dehydrogenase family. In terms of assembly, homodimer.

The catalysed reaction is shikimate + NADP(+) = 3-dehydroshikimate + NADPH + H(+). It participates in metabolic intermediate biosynthesis; chorismate biosynthesis; chorismate from D-erythrose 4-phosphate and phosphoenolpyruvate: step 4/7. Its function is as follows. Involved in the biosynthesis of the chorismate, which leads to the biosynthesis of aromatic amino acids. Catalyzes the reversible NADPH linked reduction of 3-dehydroshikimate (DHSA) to yield shikimate (SA). The chain is Shikimate dehydrogenase (NADP(+)) from Sinorhizobium medicae (strain WSM419) (Ensifer medicae).